Here is a 373-residue protein sequence, read N- to C-terminus: Mitochondrial nicotinamide adenine dinucleotide transporter 1 (373 aa).

The Mitochondrial matrix portion of the chain corresponds to 1 to 80; that stretch reads MTQTDNPVPN…WVPLSSTQIT (80 aa). Solcar repeat units follow at residues 75–166, 174–263, and 276–364; these read SSTQ…SKKF, FDFV…LKVR, and INLQ…FRNR. Residues 81–101 form a helical membrane-spanning segment; that stretch reads ALSGAFAGFLSGVAVCPLDVA. Residues 102–141 are Mitochondrial intermembrane-facing; it reads KTRLQAQGLQTRFENPYYRGIMGTLSTIVRDEGPRGLYKG. Residues 142–162 traverse the membrane as a helical segment; the sequence is LVPIVLGYFPTWMIYFSVYEF. Residues 163–176 are Mitochondrial matrix-facing; it reads SKKFFHGIFPQFDF. The helical transmembrane segment at 177 to 199 threads the bilayer; sequence VAQSCAAITAGAASTTLTNPIWV. Topologically, residues 200-235 are mitochondrial intermembrane; the sequence is VKTRLMLQSNLGEHPTHYKGTFDAFRKLFYQEGFKA. Residues 236–256 traverse the membrane as a helical segment; sequence LYAGLVPSLLGLFHVAIHFPI. The Mitochondrial matrix segment spans residues 257-280; that stretch reads YEDLKVRFHCYSRENNTNSINLQR. The chain crosses the membrane as a helical span at residues 281-297; the sequence is LIMASSVSKMIASAVTY. Topologically, residues 298-335 are mitochondrial intermembrane; sequence PHEILRTRMQLKSDIPDSIQRRLFPLIKATYAQEGLKG. A helical membrane pass occupies residues 336–358; it reads FYSGFTTNLVRTIPASAITLVSF. The Mitochondrial matrix portion of the chain corresponds to 359-373; sequence EYFRNRLENISTMVI.

This sequence belongs to the mitochondrial carrier (TC 2.A.29) family.

The protein resides in the mitochondrion inner membrane. It catalyses the reaction dAMP(in) + NAD(+)(out) = dAMP(out) + NAD(+)(in). The catalysed reaction is dGMP(in) + NAD(+)(out) = dGMP(out) + NAD(+)(in). It carries out the reaction GMP(in) + NAD(+)(out) = GMP(out) + NAD(+)(in). The enzyme catalyses AMP(in) + NAD(+)(out) = AMP(out) + NAD(+)(in). It catalyses the reaction deamido-NAD(+)(in) + NAD(+)(out) = deamido-NAD(+)(out) + NAD(+)(in). Its function is as follows. Mitochondrial inner membrane carrier protein that mediates the import of NAD(+) into mitochondria. Can transport NAD(+) by unidirectional transport or by exchange with intramitochondrially generated dAMP and dGMP. Also able to transport NAD(+) by exchange with AMP, GMP or deamido-NAD (+) in vitro. This chain is Mitochondrial nicotinamide adenine dinucleotide transporter 1 (YIA6), found in Saccharomyces cerevisiae (strain ATCC 204508 / S288c) (Baker's yeast).